The chain runs to 248 residues: Triosephosphate isomerase (248 aa).

9–11 (NWK) contacts substrate. The Electrophile role is filled by His-94. Glu-166 functions as the Proton acceptor in the catalytic mechanism. Residues Gly-172, Ser-212, and 233-234 (GG) contribute to the substrate site.

Belongs to the triosephosphate isomerase family. Homodimer.

The protein localises to the cytoplasm. It carries out the reaction D-glyceraldehyde 3-phosphate = dihydroxyacetone phosphate. It participates in carbohydrate biosynthesis; gluconeogenesis. The protein operates within carbohydrate degradation; glycolysis; D-glyceraldehyde 3-phosphate from glycerone phosphate: step 1/1. Its function is as follows. Involved in the gluconeogenesis. Catalyzes stereospecifically the conversion of dihydroxyacetone phosphate (DHAP) to D-glyceraldehyde-3-phosphate (G3P). This Clostridium botulinum (strain Eklund 17B / Type B) protein is Triosephosphate isomerase.